The chain runs to 331 residues: ADP-L-glycero-D-manno-heptose-6-epimerase (331 aa).

NADP(+) is bound by residues 11–12 (FI), 32–33 (DN), Lys-39, Lys-54, 75–79 (EGACS), and Asn-92. Tyr-139 (proton acceptor) is an active-site residue. Lys-143 contributes to the NADP(+) binding site. Position 168 (Asn-168) interacts with substrate. Positions 169 and 177 each coordinate NADP(+). Lys-177 serves as the catalytic Proton acceptor. Substrate contacts are provided by residues Arg-179, His-186, 200-203 (FGEY), Arg-213, and Tyr-292.

Belongs to the NAD(P)-dependent epimerase/dehydratase family. HldD subfamily. In terms of assembly, homopentamer. Requires NADP(+) as cofactor.

It carries out the reaction ADP-D-glycero-beta-D-manno-heptose = ADP-L-glycero-beta-D-manno-heptose. Its pathway is nucleotide-sugar biosynthesis; ADP-L-glycero-beta-D-manno-heptose biosynthesis; ADP-L-glycero-beta-D-manno-heptose from D-glycero-beta-D-manno-heptose 7-phosphate: step 4/4. Functionally, catalyzes the interconversion between ADP-D-glycero-beta-D-manno-heptose and ADP-L-glycero-beta-D-manno-heptose via an epimerization at carbon 6 of the heptose. This is ADP-L-glycero-D-manno-heptose-6-epimerase from Cupriavidus metallidurans (strain ATCC 43123 / DSM 2839 / NBRC 102507 / CH34) (Ralstonia metallidurans).